Consider the following 344-residue polypeptide: N-acetyl-gamma-glutamyl-phosphate reductase (344 aa).

C150 is a catalytic residue.

Belongs to the NAGSA dehydrogenase family. Type 1 subfamily.

The protein localises to the cytoplasm. It catalyses the reaction N-acetyl-L-glutamate 5-semialdehyde + phosphate + NADP(+) = N-acetyl-L-glutamyl 5-phosphate + NADPH + H(+). The protein operates within amino-acid biosynthesis; L-arginine biosynthesis; N(2)-acetyl-L-ornithine from L-glutamate: step 3/4. In terms of biological role, catalyzes the NADPH-dependent reduction of N-acetyl-5-glutamyl phosphate to yield N-acetyl-L-glutamate 5-semialdehyde. This Pseudomonas savastanoi pv. phaseolicola (strain 1448A / Race 6) (Pseudomonas syringae pv. phaseolicola (strain 1448A / Race 6)) protein is N-acetyl-gamma-glutamyl-phosphate reductase.